The chain runs to 1320 residues: Inner centromere protein A (1320 aa).

Disordered regions lie at residues 53-75 (KNSNYLNNNNNNNNNNNNNNNIS), 426-447 (QEKQQQQQEKQQEKQQQQQPVV), 611-679 (NEPI…VVPP), 701-877 (EEEE…NTAS), and 896-1215 (TKSP…DGDE). Low complexity-rich tracts occupy residues 54–75 (NSNYLNNNNNNNNNNNNNNNIS), 429–447 (QQQQQEKQQEKQQQQQPVV), and 615–640 (QQPSSSSSQLSSSQQPSSSSSSSSSS). Positions 221 to 444 (QQNQFQEQHK…KQQEKQQQQQ (224 aa)) form a coiled coil. Residues 653 to 668 (TIVTSKPTNKVQPQSL) are compositionally biased toward polar residues. A compositionally biased stretch (low complexity) spans 669 to 679 (NSNINNNVVPP). Positions 683 to 855 (AAIANKLKKQ…QKKKTVQTIL (173 aa)) form a coiled coil. Over residues 701–835 (EEEERLRKKQ…QEKEKQEKQK (135 aa)) the composition is skewed to basic and acidic residues. Residues 851–863 (VQTILPTPQTPSR) show a composition bias toward polar residues. Residues 864–877 (SANNNYDDAANTAS) show a composition bias toward low complexity. 2 stretches are compositionally biased toward acidic residues: residues 908–926 (DDQDDDDCEDYDGTDENSE) and 934–951 (QDDSDQEIEEQFENDSDE). A compositionally biased stretch (low complexity) spans 965–977 (NKNKNSNNSNNNN). Over residues 981 to 1000 (QSRKDKSIVFDSDSLNRNHN) the composition is skewed to basic and acidic residues. Low complexity-rich tracts occupy residues 1026-1040 (SNMKNNNNNNTYSNS) and 1047-1061 (SPPSSVSDYSPSSES). Positions 1062–1071 (NDCFSPLTPT) are enriched in polar residues. The segment covering 1072-1096 (NNNKINNNKINNNNSNNNSFNNSNS) has biased composition (low complexity). Over residues 1120–1136 (SKTSPFLTIRNTPSPLK) the composition is skewed to polar residues. Low complexity predominate over residues 1143–1154 (NMSSASSLSSFD). Residues 1155-1170 (SDNDSDYNDNDIDDGE) are compositionally biased toward acidic residues. Positions 1175–1187 (PNENFTTPLKNQE) are enriched in polar residues. A compositionally biased stretch (low complexity) spans 1188–1198 (NNNNNNSNNSN). Residues 1199 to 1209 (TQYPIITSPPS) are compositionally biased toward polar residues.

This sequence belongs to the INCENP family. In terms of assembly, interacts with aurK.

The protein localises to the chromosome. It localises to the centromere. Its subcellular location is the cytoplasm. It is found in the cytoskeleton. The protein resides in the spindle. The protein localises to the nucleus. It localises to the cleavage furrow. Its function is as follows. Chromosomal passenger protein that seems to be required for chromosome segregation and the onset of cytokinesis during mitosis. Plays a key role in the abscission of daughter cells at the end of cytokinesis and in the establishment or maintenance of a bipolar spindle. This Dictyostelium discoideum (Social amoeba) protein is Inner centromere protein A (icpA).